A 189-amino-acid polypeptide reads, in one-letter code: Crossover junction endodeoxyribonuclease RuvC (189 aa).

Catalysis depends on residues D7, E68, and D141. The Mg(2+) site is built by D7, E68, and D141.

The protein belongs to the RuvC family. As to quaternary structure, homodimer which binds Holliday junction (HJ) DNA. The HJ becomes 2-fold symmetrical on binding to RuvC with unstacked arms; it has a different conformation from HJ DNA in complex with RuvA. In the full resolvosome a probable DNA-RuvA(4)-RuvB(12)-RuvC(2) complex forms which resolves the HJ. Mg(2+) serves as cofactor.

The protein localises to the cytoplasm. It carries out the reaction Endonucleolytic cleavage at a junction such as a reciprocal single-stranded crossover between two homologous DNA duplexes (Holliday junction).. The RuvA-RuvB-RuvC complex processes Holliday junction (HJ) DNA during genetic recombination and DNA repair. Endonuclease that resolves HJ intermediates. Cleaves cruciform DNA by making single-stranded nicks across the HJ at symmetrical positions within the homologous arms, yielding a 5'-phosphate and a 3'-hydroxyl group; requires a central core of homology in the junction. The consensus cleavage sequence is 5'-(A/T)TT(C/G)-3'. Cleavage occurs on the 3'-side of the TT dinucleotide at the point of strand exchange. HJ branch migration catalyzed by RuvA-RuvB allows RuvC to scan DNA until it finds its consensus sequence, where it cleaves and resolves the cruciform DNA. The sequence is that of Crossover junction endodeoxyribonuclease RuvC from Rhodococcus jostii (strain RHA1).